The primary structure comprises 380 residues: Cytochrome b (380 aa).

The next 4 membrane-spanning stretches (helical) occupy residues 34–54 (FGSL…LLAA), 78–99 (WLIR…YLHI), 114–134 (WNTG…GYVL), and 179–199 (FFTL…IHLT). Positions 84 and 98 each coordinate heme b. The heme b site is built by His183 and His197. Residue His202 participates in a ubiquinone binding. Transmembrane regions (helical) follow at residues 227 to 247 (LKDI…ALFS), 289 to 309 (LGGV…PLLH), 321 to 341 (FSQL…WVGS), and 348 to 368 (FIII…ILFP).

Belongs to the cytochrome b family. In terms of assembly, the cytochrome bc1 complex contains 11 subunits: 3 respiratory subunits (MT-CYB, CYC1 and UQCRFS1), 2 core proteins (UQCRC1 and UQCRC2) and 6 low-molecular weight proteins (UQCRH/QCR6, UQCRB/QCR7, UQCRQ/QCR8, UQCR10/QCR9, UQCR11/QCR10 and a cleavage product of UQCRFS1). This cytochrome bc1 complex then forms a dimer. Heme b is required as a cofactor.

The protein localises to the mitochondrion inner membrane. Component of the ubiquinol-cytochrome c reductase complex (complex III or cytochrome b-c1 complex) that is part of the mitochondrial respiratory chain. The b-c1 complex mediates electron transfer from ubiquinol to cytochrome c. Contributes to the generation of a proton gradient across the mitochondrial membrane that is then used for ATP synthesis. This chain is Cytochrome b (MT-CYB), found in Antigone rubicunda (Brolga crane).